The primary structure comprises 337 residues: ATP-dependent (S)-NAD(P)H-hydrate dehydratase (337 aa).

Serine 6 is modified (phosphoserine). The 325-residue stretch at 11-335 folds into the YjeF C-terminal domain; that stretch reads IKLAQKRCIP…DRVGEVFAKL (325 aa). Residues glycine 121 and 182–188 contribute to the (6S)-NADPHX site; that span reads NVVEFKR. Residues 218–222 and 240–249 contribute to the ATP site; these read KGQSD and GSNKRVGGQG. Residues 224–246 are disordered; it reads IFSPDSEKDMLTNSEEGSNKRVG. (6S)-NADPHX is bound at residue aspartate 250.

Belongs to the NnrD/CARKD family. The cofactor is Mg(2+).

The protein resides in the cytoplasm. It carries out the reaction (6S)-NADHX + ATP = ADP + phosphate + NADH + H(+). It catalyses the reaction (6S)-NADPHX + ATP = ADP + phosphate + NADPH + H(+). Catalyzes the dehydration of the S-form of NAD(P)HX at the expense of ATP, which is converted to ADP. Together with NAD(P)HX epimerase, which catalyzes the epimerization of the S- and R-forms, the enzyme allows the repair of both epimers of NAD(P)HX, a damaged form of NAD(P)H that is a result of enzymatic or heat-dependent hydration. The polypeptide is ATP-dependent (S)-NAD(P)H-hydrate dehydratase (Saccharomyces cerevisiae (strain ATCC 204508 / S288c) (Baker's yeast)).